Consider the following 1141-residue polypeptide: LRR receptor-like serine/threonine-protein kinase RGI1 (1141 aa).

The first 33 residues, 1–33 (MSLHSLIFFSSSSSSLLFSFFFIFIFCFSLSDA), serve as a signal peptide directing secretion. The Extracellular portion of the chain corresponds to 34-726 (EQNPEASILY…DASRTRKLRL (693 aa)). Cys69 and Cys77 are disulfide-bonded. Asn71 carries an N-linked (GlcNAc...) asparagine glycan. LRR repeat units follow at residues 80–104 (QGFI…LPAF), 105–128 (RSLQ…LGDC), 130–152 (GLKV…LSKL), 153–176 (RNLE…ISKC), 178–200 (KLKS…LGKL), 202–225 (GLEV…IGDC), 226–249 (SNLT…LGKL), 250–273 (KKLE…LGNC), 275–297 (ELVD…IGQL), 298–321 (TKLE…IGNC), 322–345 (SNLK…IGRL), 347–369 (FLEE…ISNC), 370–392 (SSLV…ELGT), 394–417 (TKLT…LADC), 418–441 (TDLQ…LFML), 443–464 (NLTK…EIGN), 465–489 (CSSL…IGSL), 490–513 (KKIN…IGSC), 514–537 (SELQ…VSSL), 538–561 (SGLQ…LGRL), 563–585 (SLNK…LGMC), 586–609 (SGLQ…LGDI), 610–634 (ENLE…IASL), 636–657 (KLSI…LANI), and 658–682 (ENLV…LFRQ). A glycan (N-linked (GlcNAc...) asparagine) is linked at Asn116. 2 short sequence motifs (small peptide recognition) span residues 185-186 (FD) and 207-210 (RIGG). N-linked (GlcNAc...) asparagine glycosylation occurs at Asn227. 2 short sequence motifs (small peptide recognition) span residues 230–235 (VLGLAE) and Tyr258. N-linked (GlcNAc...) asparagine glycosylation occurs at Asn272. The Small peptide recognition signature appears at 280-282 (FLY). Asn320 carries N-linked (GlcNAc...) asparagine glycosylation. 2 consecutive short sequence motifs (small peptide recognition) follow at residues 328–331 (DLSL) and 350–352 (EFM). N-linked (GlcNAc...) asparagine glycosylation is present at Asn368. Short sequence motifs (small peptide recognition) lie at residues 398-402 (LFFAW) and 424-427 (DLSR). N-linked (GlcNAc...) asparagine glycosylation occurs at Asn443. Residues 446 to 450 (KLLLI) carry the Small peptide recognition motif. An N-linked (GlcNAc...) asparagine glycan is attached at Asn464. Residues 470 to 472 (RLR) carry the Small peptide recognition motif. N-linked (GlcNAc...) asparagine glycosylation is present at Asn523. Asn617 carries N-linked (GlcNAc...) asparagine glycosylation. Asn664 carries an N-linked (GlcNAc...) asparagine glycan. Residues 727-747 (TLALLITLTVVLMILGAVAVI) form a helical membrane-spanning segment. Topologically, residues 748–1141 (RARRNIDNER…LLYSSSSSIE (394 aa)) are cytoplasmic. A Protein kinase domain is found at 786–1074 (LVEPNVIGKG…EIKQEREEYA (289 aa)). ATP is bound by residues 792 to 800 (IGKGCSGVV) and Lys814. Tyr868 and Tyr906 each carry phosphotyrosine. Asp919 functions as the Proton acceptor in the catalytic mechanism. 2 positions are modified to phosphotyrosine: Tyr962 and Tyr969.

The protein belongs to the protein kinase superfamily. Ser/Thr protein kinase family. In terms of assembly, interacts with beet curly top virus AL4/C4. Binds to RGF peptides such as RGF1, GLV5/CLEL1/RGF2, GLV7/CLEL3/RGF3, GLV3/RGF4, GLV10/CLEL7/RGF5 and RGF10/CLELN; these interactions trigger the formation of heterodimers with SERK1, SERK2 or BAK1/SERK3 via LRR regions. Interacts with UBP13. Phosphorylated and ubiquitinated upon interaction with RGF1, thus leading to activation a subsequent degradation. Stabilized by UBP12 and UBP13-mediated deubiquitination. In terms of processing, autophosphorylated. In terms of tissue distribution, expressed in roots.

It is found in the cell membrane. It catalyses the reaction L-seryl-[protein] + ATP = O-phospho-L-seryl-[protein] + ADP + H(+). The enzyme catalyses L-threonyl-[protein] + ATP = O-phospho-L-threonyl-[protein] + ADP + H(+). Its function is as follows. Together with RGI2, RGI3, RGI4 and RGI5, acts as a receptor of RGF peptides (e.g. RGF1, GLV5/CLEL1/RGF2, GLV7/CLEL3/RGF3, GLV3/RGF4, GLV10/CLEL7/RGF5 and RGF10/CLELN), peptide hormones which maintain the postembryonic root stem cell niche by regulating the expression levels and patterns of the transcription factor PLETHORA (PLT, e.g. PLT1 and PLT2). Links RGF peptides signal with their downstream components. The sequence is that of LRR receptor-like serine/threonine-protein kinase RGI1 from Arabidopsis thaliana (Mouse-ear cress).